The primary structure comprises 441 residues: tRNA-2-methylthio-N(6)-dimethylallyladenosine synthase (441 aa).

One can recognise an MTTase N-terminal domain in the interval 5-120 (KLLYIETFGC…LPEMVRAAEQ (116 aa)). [4Fe-4S] cluster-binding residues include Cys-14, Cys-50, Cys-83, Cys-158, Cys-162, and Cys-165. Residues 144–374 (EGGGVTRFVT…QGLQRDMTIE (231 aa)) form the Radical SAM core domain. Residues 377-439 (AGFVGTCQAV…PNSLLGELAV (63 aa)) form the TRAM domain.

The protein belongs to the methylthiotransferase family. MiaB subfamily. In terms of assembly, monomer. [4Fe-4S] cluster is required as a cofactor.

The protein localises to the cytoplasm. The catalysed reaction is N(6)-dimethylallyladenosine(37) in tRNA + (sulfur carrier)-SH + AH2 + 2 S-adenosyl-L-methionine = 2-methylsulfanyl-N(6)-dimethylallyladenosine(37) in tRNA + (sulfur carrier)-H + 5'-deoxyadenosine + L-methionine + A + S-adenosyl-L-homocysteine + 2 H(+). In terms of biological role, catalyzes the methylthiolation of N6-(dimethylallyl)adenosine (i(6)A), leading to the formation of 2-methylthio-N6-(dimethylallyl)adenosine (ms(2)i(6)A) at position 37 in tRNAs that read codons beginning with uridine. The protein is tRNA-2-methylthio-N(6)-dimethylallyladenosine synthase of Geobacter metallireducens (strain ATCC 53774 / DSM 7210 / GS-15).